The primary structure comprises 1135 residues: Putative beta-hexosaminidase (1135 aa).

Residues methionine 1–serine 23 form the signal peptide. 2 disordered regions span residues alanine 970 to glutamine 1082 and glutamine 1107 to glycine 1135. Positions asparagine 986–proline 1003 are enriched in pro residues. 2 stretches are compositionally biased toward low complexity: residues proline 1004 to glycine 1026 and threonine 1043 to glutamine 1073.

This sequence belongs to the glycosyl hydrolase 20 family. Prismatic layer of shell (at protein level). Expressed primarily in the mantle with highest level in the mantle edge and lower level in the mantle pallium.

The protein localises to the secreted. The catalysed reaction is Hydrolysis of terminal non-reducing N-acetyl-D-hexosamine residues in N-acetyl-beta-D-hexosaminides.. Its pathway is glycan degradation; chitin degradation. The polypeptide is Putative beta-hexosaminidase (Margaritifera margaritifera (Freshwater pearl mussel)).